A 392-amino-acid chain; its full sequence is Phosphoglycerate kinase (392 aa).

Substrate contacts are provided by residues 26–28 (DLN), arginine 41, 64–67 (HLGR), arginine 118, and arginine 151. ATP contacts are provided by residues lysine 202, glutamate 319, and 345–348 (GGDT).

This sequence belongs to the phosphoglycerate kinase family. In terms of assembly, monomer.

Its subcellular location is the cytoplasm. It carries out the reaction (2R)-3-phosphoglycerate + ATP = (2R)-3-phospho-glyceroyl phosphate + ADP. Its pathway is carbohydrate degradation; glycolysis; pyruvate from D-glyceraldehyde 3-phosphate: step 2/5. This chain is Phosphoglycerate kinase, found in Photobacterium profundum (strain SS9).